Consider the following 428-residue polypeptide: Enolase (428 aa).

Residue Q164 participates in (2R)-2-phosphoglycerate binding. The active-site Proton donor is the E208. 3 residues coordinate Mg(2+): D245, E286, and D313. K338, R367, S368, and K389 together coordinate (2R)-2-phosphoglycerate. K338 acts as the Proton acceptor in catalysis.

It belongs to the enolase family. The cofactor is Mg(2+).

It is found in the cytoplasm. The protein resides in the secreted. The protein localises to the cell surface. It catalyses the reaction (2R)-2-phosphoglycerate = phosphoenolpyruvate + H2O. It participates in carbohydrate degradation; glycolysis; pyruvate from D-glyceraldehyde 3-phosphate: step 4/5. Its function is as follows. Catalyzes the reversible conversion of 2-phosphoglycerate (2-PG) into phosphoenolpyruvate (PEP). It is essential for the degradation of carbohydrates via glycolysis. The chain is Enolase from Pyrococcus abyssi (strain GE5 / Orsay).